Here is a 331-residue protein sequence, read N- to C-terminus: Mycothiol acetyltransferase (331 aa).

Glutamate 33 contacts 1D-myo-inositol 2-(L-cysteinylamino)-2-deoxy-alpha-D-glucopyranoside. The segment covering 59–86 has biased composition (low complexity); sequence HAAEATAGSAASADPADPADPAAPADPA. Residues 59–89 form a disordered region; that stretch reads HAAEATAGSAASADPADPADPAAPADPADPA. 115–120 serves as a coordination point for acetyl-CoA; that stretch reads RRGHGS. Positions 183–331 constitute an N-acetyltransferase domain; that stretch reads LRLDTFEESR…DVQLRATERG (149 aa). Glutamate 210, lysine 249, and glutamate 261 together coordinate 1D-myo-inositol 2-(L-cysteinylamino)-2-deoxy-alpha-D-glucopyranoside. Position 265 to 267 (265 to 267) interacts with acetyl-CoA; sequence VAT. 1D-myo-inositol 2-(L-cysteinylamino)-2-deoxy-alpha-D-glucopyranoside is bound at residue tyrosine 299. 304–309 contributes to the acetyl-CoA binding site; it reads NAPALR.

It belongs to the acetyltransferase family. MshD subfamily. As to quaternary structure, monomer.

It catalyses the reaction 1D-myo-inositol 2-(L-cysteinylamino)-2-deoxy-alpha-D-glucopyranoside + acetyl-CoA = mycothiol + CoA + H(+). Its function is as follows. Catalyzes the transfer of acetyl from acetyl-CoA to desacetylmycothiol (Cys-GlcN-Ins) to form mycothiol. This is Mycothiol acetyltransferase from Brachybacterium faecium (strain ATCC 43885 / DSM 4810 / JCM 11609 / LMG 19847 / NBRC 14762 / NCIMB 9860 / 6-10).